Here is a 343-residue protein sequence, read N- to C-terminus: L-lysine cyclodeaminase (343 aa).

This sequence belongs to the ornithine cyclodeaminase/mu-crystallin family. The cofactor is NAD(+).

It carries out the reaction L-lysine = L-pipecolate + NH4(+). Its pathway is antibiotic biosynthesis. Inhibited by nipecotic acid and thiazolidine-2-carboxylic acid. In terms of biological role, converts L-lysine to L-pipecolate, which is incorporated into multiple secondary metabolite products, including rapamycin, tobulysin, virginiamycin and pristinamycin. This Streptomyces rapamycinicus (strain ATCC 29253 / DSM 41530 / NRRL 5491 / AYB-994) (Streptomyces hygroscopicus (strain ATCC 29253)) protein is L-lysine cyclodeaminase (rapL).